A 212-amino-acid polypeptide reads, in one-letter code: Ribosomal RNA small subunit methyltransferase G (212 aa).

S-adenosyl-L-methionine contacts are provided by residues G80, L85, 131 to 132 (AE), and R146.

Belongs to the methyltransferase superfamily. RNA methyltransferase RsmG family.

Its subcellular location is the cytoplasm. It catalyses the reaction guanosine(527) in 16S rRNA + S-adenosyl-L-methionine = N(7)-methylguanosine(527) in 16S rRNA + S-adenosyl-L-homocysteine. Functionally, specifically methylates the N7 position of guanine in position 527 of 16S rRNA. In Xanthomonas oryzae pv. oryzae (strain MAFF 311018), this protein is Ribosomal RNA small subunit methyltransferase G.